The primary structure comprises 469 residues: Threonine synthase (469 aa).

Lysine 112 is modified (N6-(pyridoxal phosphate)lysine).

It belongs to the threonine synthase family. The cofactor is pyridoxal 5'-phosphate.

The catalysed reaction is O-phospho-L-homoserine + H2O = L-threonine + phosphate. The protein operates within amino-acid biosynthesis; L-threonine biosynthesis; L-threonine from L-aspartate: step 5/5. In terms of biological role, catalyzes the gamma-elimination of phosphate from L-phosphohomoserine and the beta-addition of water to produce L-threonine. This Pseudomonas aeruginosa (strain ATCC 15692 / DSM 22644 / CIP 104116 / JCM 14847 / LMG 12228 / 1C / PRS 101 / PAO1) protein is Threonine synthase (thrC).